Here is a 254-residue protein sequence, read N- to C-terminus: NAD kinase (254 aa).

Asp44 (proton acceptor) is an active-site residue. NAD(+)-binding positions include 44 to 45 (DG), 114 to 115 (NE), Asp144, Ala152, 155 to 160 (TAYNYS), and Ala179.

This sequence belongs to the NAD kinase family. A divalent metal cation serves as cofactor.

The protein localises to the cytoplasm. The catalysed reaction is NAD(+) + ATP = ADP + NADP(+) + H(+). In terms of biological role, involved in the regulation of the intracellular balance of NAD and NADP, and is a key enzyme in the biosynthesis of NADP. Catalyzes specifically the phosphorylation on 2'-hydroxyl of the adenosine moiety of NAD to yield NADP. This Cereibacter sphaeroides (strain ATCC 17025 / ATH 2.4.3) (Rhodobacter sphaeroides) protein is NAD kinase.